The primary structure comprises 841 residues: Probable alpha-glucuronidase A (841 aa).

Positions 1-19 are cleaved as a signal peptide; sequence MLRLPLVLVWSLWASLTVA. N-linked (GlcNAc...) asparagine glycans are attached at residues Asn-50, Asn-104, Asn-223, Asn-280, Asn-311, Asn-344, Asn-466, Asn-528, Asn-577, Asn-683, Asn-724, and Asn-733.

Belongs to the glycosyl hydrolase 67 family.

It is found in the secreted. It carries out the reaction an alpha-D-glucuronoside + H2O = D-glucuronate + an alcohol. In terms of biological role, alpha-glucuronidase involved in the hydrolysis of xylan, a major structural heterogeneous polysaccharide found in plant biomass representing the second most abundant polysaccharide in the biosphere, after cellulose. Releases 4-O-methylglucuronic acid from xylan. This chain is Probable alpha-glucuronidase A (aguA), found in Aspergillus terreus (strain NIH 2624 / FGSC A1156).